We begin with the raw amino-acid sequence, 394 residues long: Purine ribonucleoside efflux pump NepI (394 aa).

The Cytoplasmic portion of the chain corresponds to 1-21 (MSEFIAENRGADAITRPNWSA). The chain crosses the membrane as a helical span at residues 22–42 (VFSVAFCVACLIIVEFLPVSL). Residues 43-54 (LTPMAQDLGISE) lie on the Periplasmic side of the membrane. A helical membrane pass occupies residues 55–75 (GVAGQSVTVTAFVAMFASLFI). Residues 76–85 (TQTIQATDRR) lie on the Cytoplasmic side of the membrane. A helical membrane pass occupies residues 86–106 (YVVILFAVLLTISCLLVSFAN). Ser107 is a topological domain (periplasmic). Residues 108 to 128 (FSLLLIGRACLGLALGGFWAM) form a helical membrane-spanning segment. Over 129 to 147 (SASLTMRLVPPRTVPKALS) the chain is Cytoplasmic. Residues 148 to 168 (VIFGAVSIALVIAAPLGSFLG) form a helical membrane-spanning segment. The Periplasmic segment spans residues 169–175 (ELIGWRN). A helical membrane pass occupies residues 176–196 (VFNAAAVMGVLCIFWIIKSLP). At 197–215 (SLPGKPSHQKQNTFRLLQR) the chain is on the cytoplasmic side. The chain crosses the membrane as a helical span at residues 216–236 (PGVMAGMIAIFMSFAGQFAFF). Over 237-255 (TYIRPVYMNLAGFGVDGLT) the chain is Periplasmic. A helical transmembrane segment spans residues 256–276 (LVLLSFGIASFIGTSLSSFIL). The Cytoplasmic portion of the chain corresponds to 277-281 (KRSVK). A helical membrane pass occupies residues 282–302 (LALAGAPLILAVSALVLTLCG). Residues 303–305 (SDK) lie on the Periplasmic side of the membrane. The helical transmembrane segment at 306 to 326 (IVATGVAIIWGLTFALVPVGW) threads the bilayer. Residues 327 to 343 (STWSTRSLADQAEKAGS) are Cytoplasmic-facing. The chain crosses the membrane as a helical span at residues 344–364 (IQVAVIQLANTCGAAIGGYAL). Residues 365–366 (DN) are Periplasmic-facing. Residues 367 to 387 (IGLTSPLMLSGTLMLLTALLV) traverse the membrane as a helical segment. The Cytoplasmic portion of the chain corresponds to 388–394 (TAKVKMK).

It belongs to the major facilitator superfamily. DHA1 family. NepI (TC 2.A.1.2.26) subfamily.

The protein resides in the cell inner membrane. The catalysed reaction is inosine(in) + H(+)(out) = inosine(out) + H(+)(in). It catalyses the reaction guanosine(in) + H(+)(out) = guanosine(out) + H(+)(in). Involved in the efflux of purine ribonucleosides, such as inosine and guanosine. This Shigella dysenteriae serotype 1 (strain Sd197) protein is Purine ribonucleoside efflux pump NepI.